A 430-amino-acid polypeptide reads, in one-letter code: Acylsugar acyltransferase 3 (430 aa).

Residues histidine 155 and aspartate 367 each act as proton acceptor in the active site.

Belongs to the plant acyltransferase family. In terms of assembly, monomer. As to expression, expressed in tip cells of type I trichomes of stems and petioles, sites of acylsugars production.

Catalyzes the transfer of short (four to five carbons) branched acyl chains to the furanose ring of di-acylsucrose acceptors to produce tri-acylsucroses such as S3:15 (5,5,5), S4:17 (2,5,5,5) and S4:24 (2,5,5,12) acylsucroses. This is Acylsugar acyltransferase 3 from Solanum lycopersicum (Tomato).